The following is a 184-amino-acid chain: Large ribosomal subunit protein uL6 (184 aa).

This sequence belongs to the universal ribosomal protein uL6 family. In terms of assembly, part of the 50S ribosomal subunit.

This protein binds to the 23S rRNA, and is important in its secondary structure. It is located near the subunit interface in the base of the L7/L12 stalk, and near the tRNA binding site of the peptidyltransferase center. This Thermotoga maritima (strain ATCC 43589 / DSM 3109 / JCM 10099 / NBRC 100826 / MSB8) protein is Large ribosomal subunit protein uL6.